The following is a 261-amino-acid chain: Ribonuclease HII (261 aa).

The 189-residue stretch at 71–259 folds into the RNase H type-2 domain; it reads KYIAGVDEVG…VKESKLHFDS (189 aa). The a divalent metal cation site is built by D77, E78, and D169.

This sequence belongs to the RNase HII family. Requires Mn(2+) as cofactor. Mg(2+) serves as cofactor.

Its subcellular location is the cytoplasm. The catalysed reaction is Endonucleolytic cleavage to 5'-phosphomonoester.. Functionally, endonuclease that specifically degrades the RNA of RNA-DNA hybrids. The protein is Ribonuclease HII of Listeria monocytogenes serovar 1/2a (strain ATCC BAA-679 / EGD-e).